A 134-amino-acid polypeptide reads, in one-letter code: Cytochrome b5 (134 aa).

Alanine 2 bears the N-acetylalanine mark. Residues lysine 7, lysine 10, and lysine 19 each carry the N6-acetyllysine modification. Residues 9–85 (VKYYTLEEIQ…SKTYIIGELH (77 aa)) form the Cytochrome b5 heme-binding domain. Residues histidine 44 and histidine 68 each contribute to the heme site. The helical transmembrane segment at 109-131 (WWTNWVIPAISALVVALMYRLYM) threads the bilayer.

Belongs to the cytochrome b5 family.

The protein resides in the endoplasmic reticulum membrane. The protein localises to the microsome membrane. Its function is as follows. Cytochrome b5 is a membrane-bound hemoprotein functioning as an electron carrier for several membrane-bound oxygenases. It is also involved in several steps of the sterol biosynthesis pathway, particularly in the C-6 double bond introduction during the C-6 desaturation. The polypeptide is Cytochrome b5 (Cyb5a) (Rattus norvegicus (Rat)).